A 566-amino-acid polypeptide reads, in one-letter code: Urease subunit alpha (566 aa).

Residues 128–566 (GGIDSHVHFI…LPMAQRYFLF (439 aa)) form the Urease domain. 3 residues coordinate Ni(2+): H133, H135, and K216. At K216 the chain carries N6-carboxylysine. H218 is a substrate binding site. Positions 245 and 271 each coordinate Ni(2+). The active-site Proton donor is the H319. D359 is a Ni(2+) binding site.

The protein belongs to the metallo-dependent hydrolases superfamily. Urease alpha subunit family. Heterotrimer of UreA (gamma), UreB (beta) and UreC (alpha) subunits. Three heterotrimers associate to form the active enzyme. Ni cation serves as cofactor. Carboxylation allows a single lysine to coordinate two nickel ions.

Its subcellular location is the cytoplasm. It catalyses the reaction urea + 2 H2O + H(+) = hydrogencarbonate + 2 NH4(+). It functions in the pathway nitrogen metabolism; urea degradation; CO(2) and NH(3) from urea (urease route): step 1/1. The protein is Urease subunit alpha of Nitrosococcus oceani (strain ATCC 19707 / BCRC 17464 / JCM 30415 / NCIMB 11848 / C-107).